Here is a 222-residue protein sequence, read N- to C-terminus: Endonuclease V (222 aa).

Mg(2+) contacts are provided by Asp43 and Asp109.

The protein belongs to the endonuclease V family. Requires Mg(2+) as cofactor.

The protein resides in the cytoplasm. The catalysed reaction is Endonucleolytic cleavage at apurinic or apyrimidinic sites to products with a 5'-phosphate.. DNA repair enzyme involved in the repair of deaminated bases. Selectively cleaves double-stranded DNA at the second phosphodiester bond 3' to a deoxyinosine leaving behind the intact lesion on the nicked DNA. This chain is Endonuclease V, found in Roseiflexus castenholzii (strain DSM 13941 / HLO8).